Consider the following 999-residue polypeptide: Signal peptide, CUB and EGF-like domain-containing protein 2 (999 aa).

Positions 1 to 31 (MGVAGRNRPGAAWAVLLLLLLLPPLLLLAGA) are cleaved as a signal peptide. An EGF-like 1; calcium-binding domain is found at 45–85 (DVDECAQGLDDCHADALCQNTPTSYKCSCKPGYQGEGRQCE). Disulfide bonds link C49–C62, C56–C71, C73–C84, C90–C102, C98–C111, and C113–C126. One can recognise an EGF-like 2; calcium-binding domain in the interval 86–127 (DIDECGNELNGGCVHDCLNIPGNYRCTCFDGFMLAHDGHNCL). The EGF-like 3; calcium-binding domain maps to 128 to 168 (DVDECLENNGGCQHTCVNVMGSYECCCKEGFFLSDNQHTCI). EGF-like domains follow at residues 177-213 (CMNK…QRDC), 217-252 (CNHG…GRSC), and 286-321 (CAVN…GKTC). Residues 323–363 (DIDECQTRNGGCDHFCKNIVGSFDCGCKKGFKLLTDEKSCQ) enclose the EGF-like 7; calcium-binding domain. Residues 364-402 (DVDECSLDRTCDHSCINHPGTFACACNRGYTLYGFTHCG) form the EGF-like 8; calcium-binding domain. 6 disulfides stabilise this stretch: C368-C378, C374-C387, C389-C401, C407-C418, C414-C427, and C429-C442. The 41-residue stretch at 403-443 (DTNECSINNGGCQQVCVNTVGSYECQCHPGYKLHWNKKDCV) folds into the EGF-like 9; calcium-binding domain. N-linked (GlcNAc...) asparagine glycosylation is present at N659. C809 and C835 are joined by a disulfide. One can recognise a CUB domain in the interval 809–921 (CGGELGDFTG…RGFQVPYVTY (113 aa)). The segment at 847 to 856 (ILIVVPEIFL) is interaction with the cholesterol-anchor of SHH. A disulfide bridge links C862 with C883.

Forms homooligomers. Forms heterooligomers with SCUBE1. Forms heterooligomers with SCUBE3. Interacts with SHH via the cholesterol anchor of the dually lipid-modified SHH (ShhNp). Interacts with PTCH1. Interacts with VEGFR2. Post-translationally, N-glycosylated. As to expression, expressed in a broad spectrum of adult tissues.

Its subcellular location is the secreted. It localises to the cell surface. In terms of biological role, lipid-binding protein required for SHH long-range signaling by binding to the dually lipid-modified SHH (ShhNp) and by promoting ShhNp mobilization, solubilization and release from the cell membrane. Acts by enhancing the proteolytic processing (shedding) of the lipid-modified N- and C- terminal of ShhNp at the cell surface. Synergizes with DISP1 to increase SHH secretion. Probable cell surface coreceptor for VEGFR2 involved in VEGFR2-mediated angiogenesis. The protein is Signal peptide, CUB and EGF-like domain-containing protein 2 of Homo sapiens (Human).